Consider the following 325-residue polypeptide: Forkhead box protein B1 (325 aa).

A DNA-binding region (fork-head) is located at residues 12 to 103; sequence QKPPYSYISL…GDMFENGSFL (92 aa). Residues 284–309 show a composition bias toward low complexity; sequence LSNSPPSLSPTSSQTATSQSSPATPS. Residues 284–325 are disordered; that stretch reads LSNSPPSLSPTSSQTATSQSSPATPSETLTSPASALHSVAVH.

In terms of tissue distribution, expressed widespread in the early developing ventricular zone of the neural tube and later restricted to areas of the spinal cord, hindbrain, thalamus and hypothalamus. Expressed in epithelial cells of developing and adult mammary glands.

It is found in the nucleus. Transcription factor expressed by neural progenitor cells in specific regions of the embryonic neuroepithelium. Essential for the mammillary nuclei maintenance. Negatively regulates the proliferation of oligodendrocyte progenitors and promotes oligodendrocyte maturation. Also expressed in mammary glands, plays a role in lactation, controls development of mammary glands and the inferior colliculi of the midbrain in the central nervous system that regulates the milk-ejection reflex. The polypeptide is Forkhead box protein B1 (Foxb1) (Mus musculus (Mouse)).